Here is a 209-residue protein sequence, read N- to C-terminus: Small ribosomal subunit protein uS5 (209 aa).

Positions Leu48–Ile111 constitute an S5 DRBM domain.

This sequence belongs to the universal ribosomal protein uS5 family. In terms of assembly, part of the 30S ribosomal subunit. Contacts protein S4.

In terms of biological role, with S4 and S12 plays an important role in translational accuracy. The protein is Small ribosomal subunit protein uS5 of Methanosarcina mazei (strain ATCC BAA-159 / DSM 3647 / Goe1 / Go1 / JCM 11833 / OCM 88) (Methanosarcina frisia).